Here is a 230-residue protein sequence, read N- to C-terminus: 7-cyano-7-deazaguanine synthase (230 aa).

L14 to L24 serves as a coordination point for ATP. C194, C204, C207, and C210 together coordinate Zn(2+).

This sequence belongs to the QueC family. Zn(2+) is required as a cofactor.

It carries out the reaction 7-carboxy-7-deazaguanine + NH4(+) + ATP = 7-cyano-7-deazaguanine + ADP + phosphate + H2O + H(+). It participates in purine metabolism; 7-cyano-7-deazaguanine biosynthesis. Functionally, catalyzes the ATP-dependent conversion of 7-carboxy-7-deazaguanine (CDG) to 7-cyano-7-deazaguanine (preQ(0)). This chain is 7-cyano-7-deazaguanine synthase, found in Vesicomyosocius okutanii subsp. Calyptogena okutanii (strain HA).